We begin with the raw amino-acid sequence, 83 residues long: Sulfur carrier protein TusA (83 aa).

The Cysteine persulfide intermediate role is filled by cysteine 19.

The protein belongs to the sulfur carrier protein TusA family.

The protein resides in the cytoplasm. Functionally, sulfur carrier protein which probably makes part of a sulfur-relay system. This is Sulfur carrier protein TusA from Aliivibrio fischeri (strain ATCC 700601 / ES114) (Vibrio fischeri).